Consider the following 345-residue polypeptide: MTDKTSLSYKDAGVDIDAGNALVERIKGVSKRTRRPEVLGGLGGFGALCQIPAGYKEPVLVSGTDGVGTKLRLAIDLKKHDTVGIDLVAMCVNDLIVQGAEPLFFLDYYATGKLDVDTAAAVVTGIGAGCEQSGCALVGGETAEMPGMYEGEDYDIAGFCVGVVEKSEIIDGSKVGEGDALIALAASGPHSNGFSLVRKILEVSKADVQQPLGDTTLANALLEPTRIYVKPVLKLIKECEIHALSHITGGGFWENIPRVLPANTQAVIDEQSWQWPAVFSWLQQAGNVTRHEMYRTFNCGVGMIIALPADQLEKALTLLKTEGENAWHIGYITKAADGEEQVIIQ.

It belongs to the AIR synthase family.

The protein localises to the cytoplasm. The enzyme catalyses 2-formamido-N(1)-(5-O-phospho-beta-D-ribosyl)acetamidine + ATP = 5-amino-1-(5-phospho-beta-D-ribosyl)imidazole + ADP + phosphate + H(+). It participates in purine metabolism; IMP biosynthesis via de novo pathway; 5-amino-1-(5-phospho-D-ribosyl)imidazole from N(2)-formyl-N(1)-(5-phospho-D-ribosyl)glycinamide: step 2/2. The protein is Phosphoribosylformylglycinamidine cyclo-ligase of Aeromonas hydrophila subsp. hydrophila (strain ATCC 7966 / DSM 30187 / BCRC 13018 / CCUG 14551 / JCM 1027 / KCTC 2358 / NCIMB 9240 / NCTC 8049).